The chain runs to 424 residues: Protein maelstrom 1 (424 aa).

Positions 2 to 69 (PPKKHSGFMM…LTRVKKERLN (68 aa)) form a DNA-binding region, HMG box.

The protein belongs to the maelstrom family.

Its subcellular location is the cytoplasm. It localises to the nucleus. Involved both in the piRNA and miRNA metabolic processes. As a component of the meiotic nuage, plays a central role during oogenesis by repressing transposable elements and preventing their mobilization, which is essential for the germline integrity. Repression of transposable elements is mediated via the piRNA metabolic process, which mediates the repression of transposable elements during meiosis by forming complexes composed of piRNAs and Piwi proteins and governs the repression of transposons. As a nuclear component, it is required for proper differentiation in the germline stem cell (GSC) lineage by repressing microRNA-7 (miR-7), thereby acting as an indirect regulator of bag-of-marbles (Bam). Acts by binding to the promoter of miR-7 gene and repressing its expression; miR-7 repression alleviates the Bam repression by miR-7, thereby allowing differentiation in the germline stem cell (GSC) lineage. In Drosophila ananassae (Fruit fly), this protein is Protein maelstrom 1 (mael1).